Consider the following 85-residue polypeptide: MSQLRSKVISLYKHLQYLGREYPGLNGPQKFRKQIHDAFMNHKDEQDPKKIVALLAQGRYLAKEVEALYSLKKYRSVKQRYSYND.

This sequence belongs to the complex I LYR family. As to expression, highly expressed in the larval fat body.

The protein resides in the mitochondrion. Acts as a regulator of the electron transfer flavoprotein by promoting the removal of flavin from the ETF holoenzyme. May act with the ETF complex to coordinate lipid homeostasis in the fat body in response to stage-specific demands. The chain is Electron transfer flavoprotein regulatory factor 1 homolog from Drosophila melanogaster (Fruit fly).